We begin with the raw amino-acid sequence, 86 residues long: Small ribosomal subunit protein uS17 (86 aa).

Belongs to the universal ribosomal protein uS17 family. In terms of assembly, part of the 30S ribosomal subunit.

One of the primary rRNA binding proteins, it binds specifically to the 5'-end of 16S ribosomal RNA. The polypeptide is Small ribosomal subunit protein uS17 (Caldicellulosiruptor saccharolyticus (strain ATCC 43494 / DSM 8903 / Tp8T 6331)).